A 192-amino-acid polypeptide reads, in one-letter code: Ras-like GTP-binding protein Rho1 (192 aa).

12-19 (GDGACGKT) contacts GTP. Residues 34–42 (YVPTVFENY) carry the Effector region motif. GTP contacts are provided by residues 59–63 (DTAGQ) and 117–120 (NKKD). Position 189 is a cysteine methyl ester (C189). C189 is lipidated: S-geranylgeranyl cysteine. Positions 190–192 (LLL) are cleaved as a propeptide — removed in mature form.

This sequence belongs to the small GTPase superfamily. Rho family. Interacts with capu. Interacts (via REM repeats) with Pkn (via N-terminus). Interacts (via N-terminus) with wash (via N-terminus). May interact with dia/diaphanous (via CBD/FH3 domain). In terms of tissue distribution, expressed in hemocytes (at protein level).

Its subcellular location is the cell membrane. It localises to the cytoplasm. It is found in the cytoskeleton. The protein localises to the apical cell membrane. The protein resides in the lateral cell membrane. Its function is as follows. Has a role in regulating actin cytoskeletal organization: required during early development for proper execution of morphogenetic movements of individual cells and groups of cells important for the formation of the embryonic body plan. Plays a role in regulating dorsal closure during embryogenesis. During axis elongation, required for Rho-kinase Rok planar polarity and adherens junction localization as well as for generating a planar polarized distribution of the actin-binding protein Shrm. During embryogenesis, acts upstream of wash to regulate the developmental migration of tail hemocytes anteriorly along the ventral midline. May have a role in eye development. Involved in targeted recruitment of dia/diaphanous to apical membranes of polarized epithelial cells. The chain is Ras-like GTP-binding protein Rho1 from Drosophila melanogaster (Fruit fly).